The sequence spans 710 residues: uncharacterized protein (710 aa).

Residues 1 to 40 (MSESDGAFKSPSLPPSHHAPAPMSPEKIRAPAEQMDGPVE) are disordered. Residues 15–25 (PSHHAPAPMSP) show a composition bias toward low complexity. In terms of domain architecture, FHA spans 108 to 165 (VVIGRIKPGCDLLMEHPSISRYHCILQYGNDKMSKTGKGWHIFELGSTHGSRMNKKRL). Coiled-coil stretches lie at residues 206–240 (TEMKLRKHKKELEAKLRAAAAQEMIDDEKREKEEE), 409–440 (ETDTYESLCRKLEESKKEIIECQKHLDELSAG), and 471–502 (AKTKMEKSKWRQKLMAATHESQKLEKLVKIAK). The tract at residues 230-250 (IDDEKREKEEEGCGWGMDYGE) is disordered. Disordered stretches follow at residues 535–560 (EIDQTPSQGPGPSTSATLPATVAPTS), 591–619 (KNSLPAVDEPSSVKDEVSEETPQKEAFGS), and 671–710 (EDYGAGVEDRDEKYSTWMPPNADQSEAKQDALRAKFAGRY). Positions 538-560 (QTPSQGPGPSTSATLPATVAPTS) are enriched in polar residues. Residues 613-661 (QKEAFGSKVQKRVAQWEEELEAEKEELAKKQKLEAEEEAKKKVQRVRRR) are a coiled coil.

This is an uncharacterized protein from Caenorhabditis elegans.